A 422-amino-acid polypeptide reads, in one-letter code: Hexuronate transporter (422 aa).

The next 11 helical transmembrane spans lie at 9 to 29, 45 to 65, 82 to 102, 141 to 161, 163 to 183, 219 to 239, 256 to 276, 294 to 314, 321 to 341, 356 to 376, and 381 to 401; these read VILF…ALSI, MGLI…LGGV, VWSL…LLII, TPLG…AFSW, VSFV…FKFV, LFTA…LTWF, VITV…GFVS, VVLV…GLVA, TLVA…WAVI, FMHF…GFIV, and TFSG…LAVI.

The protein belongs to the major facilitator superfamily. Phthalate permease family.

It is found in the cell membrane. It catalyses the reaction aldehydo-D-glucuronate(in) + H(+)(in) = aldehydo-D-glucuronate(out) + H(+)(out). The catalysed reaction is aldehydo-D-galacturonate(out) + H(+)(out) = aldehydo-D-galacturonate(in) + H(+)(in). Its function is as follows. Transport of aldohexuronates such as D-glucuronate and D-galacturonate. The sequence is that of Hexuronate transporter from Bacillus subtilis (strain 168).